We begin with the raw amino-acid sequence, 604 residues long: UvrABC system protein C (604 aa).

Positions 10–89 (ELPGVYLMKD…VKKNRPHYNI (80 aa)) constitute a GIY-YIG domain. The UVR domain occupies 199 to 234 (SGTIKELQEKMNIHAIAQEYESAAVIRDQIDALKSL).

It belongs to the UvrC family. As to quaternary structure, interacts with UvrB in an incision complex.

The protein localises to the cytoplasm. In terms of biological role, the UvrABC repair system catalyzes the recognition and processing of DNA lesions. UvrC both incises the 5' and 3' sides of the lesion. The N-terminal half is responsible for the 3' incision and the C-terminal half is responsible for the 5' incision. This chain is UvrABC system protein C, found in Methanococcoides burtonii (strain DSM 6242 / NBRC 107633 / OCM 468 / ACE-M).